We begin with the raw amino-acid sequence, 179 residues long: Transcription factor 21 (179 aa).

Residues 19–88 (DCDSLKVDSN…VQRNAANARE (70 aa)) are disordered. 2 stretches are compositionally biased toward polar residues: residues 30–49 (EFGTSNESTEEGSNCENGSP) and 70–80 (SGVSQEGKQVQ). The region spanning 79-131 (VQRNAANARERARMRVLSKAFSRLKTTLPWVPPDTKLSKLDTLRLASSYIAHL) is the bHLH domain.

In terms of assembly, efficient DNA binding requires dimerization with another bHLH protein. Forms a heterodimer with TCF3 and binds the E box (5'-CANNTG-3'). Expressed at high levels in lung, kidney, gut, heart, ovary and podocytes (visceral glomerular epithelial cells). Also found in spleen, large intestine, uterus, bladder and testis.

It is found in the nucleus. Involved in epithelial-mesenchymal interactions in kidney and lung morphogenesis that include epithelial differentiation and branching morphogenesis. May be involved in the organogenesis of the spleen and heart and in cardiac and coronary artery development. May function in the development and sex differentiation of gonad via transcriptional regulation of AD4BP/SF-1. The chain is Transcription factor 21 (Tcf21) from Mus musculus (Mouse).